The following is a 100-amino-acid chain: DRCPCPCPCPCPCPVIRPPPPKELTVGINGFGRVVAVNDPFIDPEYMVYMFKYDSTHGRRVVVTAPSPDAPMFVMGVNEKGKLTGMAFRVVDLLRYMFSR.

Residues Asp-39 and Thr-64 each coordinate NAD(+). Arg-89 lines the D-glyceraldehyde 3-phosphate pocket.

This sequence belongs to the glyceraldehyde-3-phosphate dehydrogenase family. Homotetramer.

It localises to the cytoplasm. It carries out the reaction D-glyceraldehyde 3-phosphate + phosphate + NAD(+) = (2R)-3-phospho-glyceroyl phosphate + NADH + H(+). It participates in carbohydrate degradation; glycolysis; pyruvate from D-glyceraldehyde 3-phosphate: step 1/5. Functionally, may play an important role in regulating the switch between different pathways for energy production during spermiogenesis and in the spermatozoon. Required for sperm motility and male fertility. This is Glyceraldehyde-3-phosphate dehydrogenase, testis-specific from Mesocricetus auratus (Golden hamster).